The following is a 156-amino-acid chain: MPRKGPAPKRPLVNDPVYGSQLVTQLVNKVLLKGKKSLAERIVYGALEQARDKTGTDPVITLKRALDNVKPALEVRSRRVGGATYQVPVEVRPDRSTTLALRWLIGYSRQRREKTMIERLANEILDASNGLGASVKRREDTHKMAEANRAFAHYRW.

It belongs to the universal ribosomal protein uS7 family. As to quaternary structure, part of the 30S ribosomal subunit. Contacts proteins S9 and S11.

One of the primary rRNA binding proteins, it binds directly to 16S rRNA where it nucleates assembly of the head domain of the 30S subunit. Is located at the subunit interface close to the decoding center, probably blocks exit of the E-site tRNA. In Mycobacterium tuberculosis (strain CDC 1551 / Oshkosh), this protein is Small ribosomal subunit protein uS7.